The following is a 71-amino-acid chain: Gas vesicle protein A (71 aa).

Residues 12 to 22 (LAEVIDRILDK) are alpha helix 1. The interval 26 to 34 (IDAWARVSL) is beta-strand 1. The beta turn stretch occupies residues 35–37 (VGI). A beta-strand 2 region spans residues 38 to 46 (ELLAIEARV). An alpha helix 2 region spans residues 51-70 (VETYLKYAEAVGLTQXAXXA).

This sequence belongs to the gas vesicle GvpA family. In terms of assembly, the gas vesicle shell is 2 nm thick and consists of a single layer of this protein. It forms helical ribs nearly perpendicular to the long axis of the vesicle.

The protein localises to the gas vesicle shell. Gas vesicles are hollow, gas filled proteinaceous nanostructures found in some microorganisms. During planktonic growth they allow positioning of the organism at a favorable depth for light or nutrient acquisition. GvpA forms the protein shell. The protein is Gas vesicle protein A of Microcystis sp. (strain BC 84/1).